The chain runs to 381 residues: Creatine kinase B-type (381 aa).

The residue at position 4 (S4) is a Phosphoserine. The Phosphagen kinase N-terminal domain maps to 11-98 (KLRFPAEDEF…FDPIIEERHG (88 aa)). T35 bears the Phosphothreonine mark. A Glycyl lysine isopeptide (Lys-Gly) (interchain with G-Cter in ubiquitin) cross-link involves residue K45. Position 72 (V72) interacts with creatine. Residues 96 to 110 (RHGGYQPSDEHKTDL) are compositionally biased toward basic and acidic residues. The disordered stretch occupies residues 96-123 (RHGGYQPSDEHKTDLNPDNLQGGDDLDP). Residue K107 forms a Glycyl lysine isopeptide (Lys-Gly) (interchain with G-Cter in ubiquitin) linkage. Y125 bears the Phosphotyrosine mark. Residues 125 to 367 (YVLSSRVRTG…KLLIEMEQRL (243 aa)) form the Phosphagen kinase C-terminal domain. Residues 128 to 132 (SSRVR), R130, R132, and H191 each bind ATP. The tract at residues 130 to 138 (RVRTGRSIR) is internal MTS-like signal. Position 199 is a phosphoserine (S199). Position 232 (E232) interacts with creatine. R236 is a binding site for ATP. Position 269 is a 3'-nitrotyrosine (Y269). S285 serves as a coordination point for creatine. R292 lines the ATP pocket. S309 is subject to Phosphoserine. ATP is bound by residues R320, 320–325 (RGTGGV), and D335. Phosphothreonine is present on T322. Residue K381 forms a Glycyl lysine isopeptide (Lys-Gly) (interchain with G-Cter in ubiquitin) linkage.

Belongs to the ATP:guanido phosphotransferase family. In terms of assembly, dimer of identical or non-identical chains, which can be either B (brain type) or M (muscle type). With MM being the major form in skeletal muscle and myocardium, MB existing in myocardium, and BB existing in many tissues, especially brain. Interacts with SLC12A6 (via C-terminus); the interaction may be required for SLC12A6 potassium-chloride cotransport activity. Post-translationally, ubiquitinated by the ECS(ASB9) complex, leading to its degradation by the proteasome. In terms of tissue distribution, expressed in hippocampus and corpus callosum (at protein level).

It is found in the cytoplasm. The protein resides in the cytosol. Its subcellular location is the mitochondrion. The protein localises to the cell membrane. It carries out the reaction creatine + ATP = N-phosphocreatine + ADP + H(+). Its function is as follows. Reversibly catalyzes the transfer of phosphate between ATP and various phosphogens (e.g. creatine phosphate). Creatine kinase isoenzymes play a central role in energy transduction in tissues with large, fluctuating energy demands, such as skeletal muscle, heart, brain and spermatozoa. Acts as a key regulator of adaptive thermogenesis as part of the futile creatine cycle: localizes to the mitochondria of thermogenic fat cells and acts by mediating phosphorylation of creatine to initiate a futile cycle of creatine phosphorylation and dephosphorylation. During the futile creatine cycle, creatine and N-phosphocreatine are in a futile cycle, which dissipates the high energy charge of N-phosphocreatine as heat without performing any mechanical or chemical work. This Mus musculus (Mouse) protein is Creatine kinase B-type.